The primary structure comprises 318 residues: Protoheme IX farnesyltransferase (318 aa).

The next 9 helical transmembrane spans lie at 29 to 49 (IIPLLLITTAGSMWIAAQGQV), 51 to 71 (PVLLLVTMAGGTLAAASAQTI), 102 to 122 (LIFAIALAVLSFTLLTVFANL), 123 to 143 (LAASLALSGIIFYVLIYTHWL), 151 to 171 (IVIGGAAGAIPALVGWAAVTG), 179 to 199 (LIFAIVFLWTPPHFWALALMI), 219 to 239 (ATVKQIWYYTLITVAATLLLV), 241 to 261 (PLHASGIVYAAIAISLGAVFI), and 280 to 300 (LFLYSISYMMLLCLGMVVDSL).

This sequence belongs to the UbiA prenyltransferase family. Protoheme IX farnesyltransferase subfamily.

The protein localises to the cell inner membrane. The catalysed reaction is heme b + (2E,6E)-farnesyl diphosphate + H2O = Fe(II)-heme o + diphosphate. It participates in porphyrin-containing compound metabolism; heme O biosynthesis; heme O from protoheme: step 1/1. In terms of biological role, converts heme B (protoheme IX) to heme O by substitution of the vinyl group on carbon 2 of heme B porphyrin ring with a hydroxyethyl farnesyl side group. In Nostoc sp. (strain PCC 7120 / SAG 25.82 / UTEX 2576), this protein is Protoheme IX farnesyltransferase.